A 344-amino-acid chain; its full sequence is Dihydroorotase (344 aa).

Positions 13 and 15 each coordinate Zn(2+). Substrate contacts are provided by residues 15–17 (HLR) and N41. The Zn(2+) site is built by K99, H136, and H174. Residue K99 is modified to N6-carboxylysine. H136 contacts substrate. L219 contributes to the substrate binding site. D247 is a Zn(2+) binding site. The active site involves D247. The substrate site is built by H251 and A263.

This sequence belongs to the metallo-dependent hydrolases superfamily. DHOase family. Class II DHOase subfamily. As to quaternary structure, homodimer. The cofactor is Zn(2+).

The enzyme catalyses (S)-dihydroorotate + H2O = N-carbamoyl-L-aspartate + H(+). Its pathway is pyrimidine metabolism; UMP biosynthesis via de novo pathway; (S)-dihydroorotate from bicarbonate: step 3/3. Catalyzes the reversible cyclization of carbamoyl aspartate to dihydroorotate. The sequence is that of Dihydroorotase from Acinetobacter baylyi (strain ATCC 33305 / BD413 / ADP1).